Here is a 371-residue protein sequence, read N- to C-terminus: MTGMVGTILRRKAEQNMTDVTIRNVTKRYGALTVIPQLSFRIEDGEFVVLVGPSGCGKSTLLRMLAGLEEISGGDLLMGADVINDRPAKERDMAIVFQNYALYPHMTVAENMGFALKLRKRPRAEIDERVDKAAAILGLGKLLDRYPRALSGGQRQRVAMGRAIVRDPQVFLFDEPLSNLDAKLRVQMRAEIKALHQRLKITTVYVTHDQIEAMTMADKIVVMNEGRVEQMGTPLELYDRPANIFVAGFIGSPSMNFLPATVAATNGPLLKTPEGVALPIDGGPTLTGRSEVTYGIRPEHLQLGETGIPAEVVVVEPTGSETQLYVTVGGREVVAVLRDRVDVRPGEKIWLTPRKGCAHLFDPNTGARIAG.

The ABC transporter domain occupies 20–250 (VTIRNVTKRY…PANIFVAGFI (231 aa)). 52 to 59 (GPSGCGKS) contacts ATP.

The protein belongs to the ABC transporter superfamily.

The protein localises to the cell inner membrane. Its function is as follows. Probably part of a binding-protein-dependent transport system y4oPQRS. This system probably transports a sugar-like molecule. Probably responsible for energy coupling to the transport system. This is an uncharacterized protein from Sinorhizobium fredii (strain NBRC 101917 / NGR234).